Reading from the N-terminus, the 324-residue chain is Galactosylgalactosylxylosylprotein 3-beta-glucuronosyltransferase 2 (324 aa).

Over 1-2 (MK) the chain is Cytoplasmic. A helical; Signal-anchor for type II membrane protein transmembrane segment spans residues 3 to 23 (SALCNRFFILLPWILIVIIML). The Lumenal segment spans residues 24 to 324 (DVDPRRPAPQ…YHMDTVNIEV (301 aa)). Residues 34-78 (LTSRPYFSPHTVGCGGSRVPLRRSSPGRDAAEKRNESRPQLQPEP) form a disordered region. N-linked (GlcNAc...) asparagine glycosylation occurs at Asn-68. Asp-188 contacts Mn(2+). The active-site Proton acceptor is the Glu-274. A glycan (N-linked (GlcNAc...) asparagine) is linked at Asn-293.

This sequence belongs to the glycosyltransferase 43 family. As to quaternary structure, homodimer. Mn(2+) is required as a cofactor. Expressed in the cerebral cortex, cerebellum and whole brain.

The protein resides in the golgi apparatus membrane. It carries out the reaction 3-O-(beta-D-galactosyl-(1-&gt;3)-beta-D-galactosyl-(1-&gt;4)-beta-D-xylosyl)-L-seryl-[protein] + UDP-alpha-D-glucuronate = 3-O-(beta-D-GlcA-(1-&gt;3)-beta-D-Gal-(1-&gt;3)-beta-D-Gal-(1-&gt;4)-beta-D-Xyl)-L-seryl-[protein] + UDP + H(+). It functions in the pathway protein modification; protein glycosylation. In terms of biological role, involved in the biosynthesis of L2/HNK-1 carbohydrate epitope on both glycolipids and glycoproteins. Substrates include asialo-orosomucoid (ASOR), paragloboside (lacto-N-neotetraosylceramide), Gal-beta-1,4-GlcNAc-beta-1,3-Gal-beta-1,4-Glc-pyridylamine and Gal-beta-1,3-GlcNAc-beta-1,3-Gal-beta-1,4-Glc-pyridylamine. This is Galactosylgalactosylxylosylprotein 3-beta-glucuronosyltransferase 2 (B3gat2) from Rattus norvegicus (Rat).